We begin with the raw amino-acid sequence, 152 residues long: Protein Turandot X (152 aa).

The first 22 residues, 1-22, serve as a signal peptide directing secretion; the sequence is MGFYISSLLICVFLGIVRFASA.

The protein belongs to the Turandot family.

It localises to the secreted. In terms of biological role, a humoral factor that may play a role in stress tolerance. This chain is Protein Turandot X, found in Drosophila erecta (Fruit fly).